Consider the following 1163-residue polypeptide: Spike glycoprotein (1163 aa).

An N-terminal signal peptide occupies residues 1–18; that stretch reads MLERSLLLATLLSALCSA. Residues 19–1096 lie on the Extracellular side of the membrane; it reads NLFGNNSYVY…LKTYIKWPWY (1078 aa). 24 N-linked (GlcNAc...) asparagine; by host glycosylation sites follow: Asn-23, Asn-51, Asn-74, Asn-102, Asn-139, Asn-145, Asn-164, Asn-179, Asn-213, Asn-238, Asn-248, Asn-265, Asn-272, Asn-277, Asn-307, Asn-426, Asn-448, Asn-514, Asn-531, Asn-543, Asn-580, Asn-592, Asn-670, and Asn-677. A heptad repeat 1 (HR1) region spans residues 770-875; sequence IPFATQLQAR…QVDRIITGRL (106 aa). Residues 823-867 adopt a coiled-coil conformation; it reads QDVVNKQSSILTETMASLNKNFGAISSVLQDIYQQLDSIQADAQV. Residues Asn-948, Asn-961, Asn-980, Asn-1015, Asn-1039, Asn-1052, and Asn-1075 are each glycosylated (N-linked (GlcNAc...) asparagine; by host). A heptad repeat 2 (HR2) region spans residues 1025-1106; that stretch reads NDDFDFDDEL…VWLAIAFLTI (82 aa). A coiled-coil region spans residues 1056–1084; the sequence is PILDIGSEIDRIQGVIQGLNDSLIDLETL. Residues 1097 to 1117 form a helical membrane-spanning segment; sequence VWLAIAFLTIIFILVLCWIFF. Over 1118-1163 the chain is Cytoplasmic; sequence MTGCCGCCCGCFGIIPLMSKCGKKSSYYTTFDNDVVYEQYRPKKSV. Positions 1160-1163 match the Di-lysine motif motif; the sequence is KKSV.

The protein belongs to the gammacoronaviruses spike protein family. Homotrimer; each monomer consists of a S1 and a S2 subunit. The resulting peplomers protrude from the virus surface as spikes. Specific enzymatic cleavages in vivo yield mature proteins. The precursor is processed into S1 and S2 by host cell furin or furin-like protease to yield the mature S1 and S2 proteins. The cleavage site between S1 and S2 requires the optimal sequence [KR]-X-[KR]-R. Additionally, a second cleavage leads to the release of a fusion peptide after viral attachment to host cell receptor.

It is found in the virion membrane. The protein resides in the host endoplasmic reticulum-Golgi intermediate compartment membrane. In terms of biological role, attaches the virion to the host cell membrane by interacting with sialic acids, initiating the infection. Its function is as follows. Mediates fusion of the virion and cellular membranes by acting as a class I viral fusion protein. Under the current model, the protein has at least 3 conformational states: pre-fusion native state, pre-hairpin intermediate state, and post-fusion hairpin state. During viral and target cell membrane fusion, the coiled coil regions (heptad repeats) assume a trimer-of-hairpins structure, positioning the fusion peptide in close proximity to the C-terminal region of the ectodomain. The formation of this structure appears to drive apposition and subsequent fusion of viral and target cell membranes. Functionally, acts as a viral fusion peptide after S2 cleavage occurring upon virus endocytosis. The polypeptide is Spike glycoprotein (Gallus gallus (Chicken)).